We begin with the raw amino-acid sequence, 325 residues long: MRRYARITGTGSYLPPRRLTNHDLAAELAQRGIETSDEWIVERTGIHARHFAAPDVASSDLALEASKKALEAAGCQPQDIDLIIVATSTPDMVFPSTACILQNKLGANGCAAFDVQAVCSGFVYALTVADAMIQSGAASRALVVGSEVFSRILDFNDRTTCVLFGDGAGAVVLEASEQPGILASDLHADGKHVGILCVPGNVSGGQVLGDPLLKMDGQAVFKLAVGVLEKAARATLDKAGLTDADIDWLIPHQANIRIMQSTARKLKLSMDKVVVTVDQHGNTSAASIPLALDHGVRNGQVKPGQTVLLEGVGGGFTWGAVLLKM.

Residues Cys-119 and His-252 contribute to the active site. The segment at 253–257 (QANIR) is ACP-binding. The active site involves Asn-282.

The protein belongs to the thiolase-like superfamily. FabH family. Homodimer.

The protein resides in the cytoplasm. The catalysed reaction is malonyl-[ACP] + acetyl-CoA + H(+) = 3-oxobutanoyl-[ACP] + CO2 + CoA. The protein operates within lipid metabolism; fatty acid biosynthesis. Functionally, catalyzes the condensation reaction of fatty acid synthesis by the addition to an acyl acceptor of two carbons from malonyl-ACP. Catalyzes the first condensation reaction which initiates fatty acid synthesis and may therefore play a role in governing the total rate of fatty acid production. Possesses both acetoacetyl-ACP synthase and acetyl transacylase activities. Its substrate specificity determines the biosynthesis of branched-chain and/or straight-chain of fatty acids. This Delftia acidovorans (strain DSM 14801 / SPH-1) protein is Beta-ketoacyl-[acyl-carrier-protein] synthase III.